A 669-amino-acid polypeptide reads, in one-letter code: DNA ligase (669 aa).

NAD(+) is bound by residues 33–37 (DLTYD), 82–83 (SL), and E115. Residue K117 is the N6-AMP-lysine intermediate of the active site. 4 residues coordinate NAD(+): R138, E172, K286, and K310. C401, C404, C417, and C422 together coordinate Zn(2+).

This sequence belongs to the NAD-dependent DNA ligase family. LigA subfamily. It depends on Mg(2+) as a cofactor. The cofactor is Mn(2+).

The catalysed reaction is NAD(+) + (deoxyribonucleotide)n-3'-hydroxyl + 5'-phospho-(deoxyribonucleotide)m = (deoxyribonucleotide)n+m + AMP + beta-nicotinamide D-nucleotide.. In terms of biological role, DNA ligase that catalyzes the formation of phosphodiester linkages between 5'-phosphoryl and 3'-hydroxyl groups in double-stranded DNA using NAD as a coenzyme and as the energy source for the reaction. It is essential for DNA replication and repair of damaged DNA. The sequence is that of DNA ligase from Borrelia hermsii (strain HS1 / DAH).